We begin with the raw amino-acid sequence, 543 residues long: CTP synthase (543 aa).

The amidoligase domain stretch occupies residues 1–265 (MARYIFITGG…DDEVLAAFGI (265 aa)). CTP is bound at residue Ser-13. Ser-13 contributes to the UTP binding site. 14-19 (SLGKGL) contributes to the ATP binding site. Tyr-54 is an L-glutamine binding site. Asp-71 is an ATP binding site. Mg(2+) is bound by residues Asp-71 and Glu-139. CTP is bound by residues 146–148 (DIE), 186–191 (KTKPTQ), and Lys-222. UTP is bound by residues 186 to 191 (KTKPTQ) and Lys-222. An ATP-binding site is contributed by 238 to 240 (RDA). One can recognise a Glutamine amidotransferase type-1 domain in the interval 291–542 (TIAIVGKYTG…IQAAVVQSRL (252 aa)). Gly-353 serves as a coordination point for L-glutamine. Cys-380 (nucleophile; for glutamine hydrolysis) is an active-site residue. Residues 381–384 (FGMQ), Glu-404, and Arg-470 contribute to the L-glutamine site. Active-site residues include His-515 and Glu-517.

Belongs to the CTP synthase family. In terms of assembly, homotetramer.

The enzyme catalyses UTP + L-glutamine + ATP + H2O = CTP + L-glutamate + ADP + phosphate + 2 H(+). It catalyses the reaction L-glutamine + H2O = L-glutamate + NH4(+). The catalysed reaction is UTP + NH4(+) + ATP = CTP + ADP + phosphate + 2 H(+). It participates in pyrimidine metabolism; CTP biosynthesis via de novo pathway; CTP from UDP: step 2/2. Allosterically activated by GTP, when glutamine is the substrate; GTP has no effect on the reaction when ammonia is the substrate. The allosteric effector GTP functions by stabilizing the protein conformation that binds the tetrahedral intermediate(s) formed during glutamine hydrolysis. Inhibited by the product CTP, via allosteric rather than competitive inhibition. Functionally, catalyzes the ATP-dependent amination of UTP to CTP with either L-glutamine or ammonia as the source of nitrogen. Regulates intracellular CTP levels through interactions with the four ribonucleotide triphosphates. This Nitrobacter winogradskyi (strain ATCC 25391 / DSM 10237 / CIP 104748 / NCIMB 11846 / Nb-255) protein is CTP synthase.